Consider the following 132-residue polypeptide: UPF0357 protein YCL012C (132 aa).

The signal sequence occupies residues 1–25; sequence MWDLFYFKVFFWVVLISLCIFMVHR.

It belongs to the UPF0357 family.

In Saccharomyces bayanus (Yeast), this protein is UPF0357 protein YCL012C (YCL012C).